Consider the following 86-residue polypeptide: U15-lycotoxin-Ls1d (86 aa).

The first 20 residues, 1-20 (MNSKIFAVLLLLALLSCVLS), serve as a signal peptide directing secretion. The 46-residue stretch at 21-66 (DQYCPKSSITACKKMNIRNDCCKDDDCTGGSWCCATPCGNFCKYPT) folds into the WAP domain. 5 cysteine pairs are disulfide-bonded: Cys-24–Cys-54, Cys-32–Cys-58, Cys-41–Cys-53, Cys-42–Cys-80, and Cys-47–Cys-62.

Belongs to the venom protein 11 family. 01 (wap-1) subfamily. Contains 5 disulfide bonds. In terms of tissue distribution, expressed by the venom gland.

It localises to the secreted. Has antibacterial activity. The chain is U15-lycotoxin-Ls1d from Lycosa singoriensis (Wolf spider).